A 293-amino-acid chain; its full sequence is Acetylglutamate kinase (293 aa).

Substrate is bound by residues 68–69 (GG), Arg90, and Asn189.

Belongs to the acetylglutamate kinase family. ArgB subfamily.

The protein localises to the cytoplasm. It carries out the reaction N-acetyl-L-glutamate + ATP = N-acetyl-L-glutamyl 5-phosphate + ADP. It participates in amino-acid biosynthesis; L-arginine biosynthesis; N(2)-acetyl-L-ornithine from L-glutamate: step 2/4. In terms of biological role, catalyzes the ATP-dependent phosphorylation of N-acetyl-L-glutamate. In Mycobacterium marinum (strain ATCC BAA-535 / M), this protein is Acetylglutamate kinase.